Reading from the N-terminus, the 197-residue chain is MSSTAGTRRPRQITPTSPSPSPEPQPGATNGSSSTINVAVPSASAPAQVAPSQVAAAAATPVDAAEAVRINLETRVRSVVDLLYQLAVCSADVQEGSQHLVANKVNECIQALAALDATKDELHRAHMMIPQDVLEMLDTGKNPDIHTRNFVNRLASENQYSYGQHRAVERYKATLDAALDQAFPELKAAQAESTETK.

The tract at residues 1–39 is disordered; it reads MSSTAGTRRPRQITPTSPSPSPEPQPGATNGSSSTINVA. Residues 27-37 show a composition bias toward polar residues; that stretch reads GATNGSSSTIN.

The protein belongs to the Mediator complex subunit 10 family. In terms of assembly, component of the Mediator complex.

The protein localises to the nucleus. Component of the Mediator complex, a coactivator involved in the regulated transcription of nearly all RNA polymerase II-dependent genes. Mediator functions as a bridge to convey information from gene-specific regulatory proteins to the basal RNA polymerase II transcription machinery. Mediator is recruited to promoters by direct interactions with regulatory proteins and serves as a scaffold for the assembly of a functional preinitiation complex with RNA polymerase II and the general transcription factors. The chain is Mediator of RNA polymerase II transcription subunit 10 (NUT2) from Mycosarcoma maydis (Corn smut fungus).